The chain runs to 910 residues: DNA mismatch repair protein MutS (910 aa).

Residue 615-622 (GPNMAGKS) coordinates ATP.

This sequence belongs to the DNA mismatch repair MutS family.

Functionally, this protein is involved in the repair of mismatches in DNA. It is possible that it carries out the mismatch recognition step. This protein has a weak ATPase activity. This is DNA mismatch repair protein MutS from Clostridium perfringens (strain ATCC 13124 / DSM 756 / JCM 1290 / NCIMB 6125 / NCTC 8237 / Type A).